The chain runs to 205 residues: Thymidylate kinase (205 aa).

11–18 (GLDKSGKT) is a binding site for ATP.

The protein belongs to the thymidylate kinase family. As to quaternary structure, homodimer; the dimer arrangement is orthogonal and not antiparallel as in human enzyme.

The enzyme catalyses dTMP + ATP = dTDP + ADP. It functions in the pathway pyrimidine metabolism; dTTP biosynthesis. Poxvirus TMP kinase is able to phosphorylate dTMP, dUMP and also dGMP from any purine and pyrimidine nucleoside triphosphate. The large substrate specificity is explained by the presence of a canal connecting the edge of the dimer interface to the TMP base binding pocket, canal not found in the human homolog. The protein is Thymidylate kinase (OPG178) of Homo sapiens (Human).